Here is a 332-residue protein sequence, read N- to C-terminus: Glycerol-3-phosphate dehydrogenase [NAD(P)+] (332 aa).

4 residues coordinate NADPH: Ser11, Phe12, Lys32, and Lys106. Lys106, Gly137, and Ser139 together coordinate sn-glycerol 3-phosphate. Residue Ala141 coordinates NADPH. Sn-glycerol 3-phosphate-binding residues include Lys192, Asp245, Ser255, Arg256, and Asn257. The Proton acceptor role is filled by Lys192. Arg256 provides a ligand contact to NADPH. Val280 and Glu282 together coordinate NADPH.

The protein belongs to the NAD-dependent glycerol-3-phosphate dehydrogenase family.

It is found in the cytoplasm. The catalysed reaction is sn-glycerol 3-phosphate + NAD(+) = dihydroxyacetone phosphate + NADH + H(+). It carries out the reaction sn-glycerol 3-phosphate + NADP(+) = dihydroxyacetone phosphate + NADPH + H(+). The protein operates within membrane lipid metabolism; glycerophospholipid metabolism. Its function is as follows. Catalyzes the reduction of the glycolytic intermediate dihydroxyacetone phosphate (DHAP) to sn-glycerol 3-phosphate (G3P), the key precursor for phospholipid synthesis. The protein is Glycerol-3-phosphate dehydrogenase [NAD(P)+] of Staphylococcus epidermidis (strain ATCC 35984 / DSM 28319 / BCRC 17069 / CCUG 31568 / BM 3577 / RP62A).